The sequence spans 205 residues: ATP synthase subunit b 1 (205 aa).

The segment covering 1–15 (MFVSTAFAQTATESQ) has biased composition (polar residues). Residues 1-26 (MFVSTAFAQTATESQPAPAAGEHGAA) are disordered. Positions 16-26 (PAPAAGEHGAA) are enriched in low complexity. A helical transmembrane segment spans residues 56-78 (SQILWLAITFGLFYLFMSRVVLP).

This sequence belongs to the ATPase B chain family. As to quaternary structure, F-type ATPases have 2 components, F(1) - the catalytic core - and F(0) - the membrane proton channel. F(1) has five subunits: alpha(3), beta(3), gamma(1), delta(1), epsilon(1). F(0) has three main subunits: a(1), b(2) and c(10-14). The alpha and beta chains form an alternating ring which encloses part of the gamma chain. F(1) is attached to F(0) by a central stalk formed by the gamma and epsilon chains, while a peripheral stalk is formed by the delta and b chains.

The protein localises to the cell inner membrane. Functionally, f(1)F(0) ATP synthase produces ATP from ADP in the presence of a proton or sodium gradient. F-type ATPases consist of two structural domains, F(1) containing the extramembraneous catalytic core and F(0) containing the membrane proton channel, linked together by a central stalk and a peripheral stalk. During catalysis, ATP synthesis in the catalytic domain of F(1) is coupled via a rotary mechanism of the central stalk subunits to proton translocation. In terms of biological role, component of the F(0) channel, it forms part of the peripheral stalk, linking F(1) to F(0). The sequence is that of ATP synthase subunit b 1 from Brucella anthropi (strain ATCC 49188 / DSM 6882 / CCUG 24695 / JCM 21032 / LMG 3331 / NBRC 15819 / NCTC 12168 / Alc 37) (Ochrobactrum anthropi).